Reading from the N-terminus, the 631-residue chain is Chaperone protein DnaK (631 aa).

Position 197 is a phosphothreonine; by autocatalysis (Thr197). The tract at residues 598-631 is disordered; the sequence is MYKKEQGQTGGTEQGGTEQKKSGGDDDVIDAEVE. Residues 622–631 show a composition bias toward acidic residues; sequence DDDVIDAEVE.

The protein belongs to the heat shock protein 70 family.

Functionally, acts as a chaperone. In Nitratiruptor sp. (strain SB155-2), this protein is Chaperone protein DnaK.